A 241-amino-acid polypeptide reads, in one-letter code: MLENIRIVLIETSHSGNIGSAARAMKTMGLTQLCLVSPKSVDEQSYALSAGAENIVKNARVVDSFDEAVDDCSLVIGTSARLRHLQNTLIEPRECAEKVVAYKGKIAIVFGRERIGLTNEELLKCHYHLNIPANPDYSSLNLAMAVQLVSYELRMAFLVQNNKKNSLSLIEKNYPTTDQLAYFFDYTERIYQSLGFIQNQGVMRKLKRLYYRAKLEKNELNILNGMLSAVEKRIDLTKEDN.

S-adenosyl-L-methionine contacts are provided by residues Thr78–Ala80, Gly111, Ile131, and Ser138–Leu140.

It belongs to the class IV-like SAM-binding methyltransferase superfamily. RNA methyltransferase TrmH family.

This is an uncharacterized protein from Haemophilus influenzae (strain ATCC 51907 / DSM 11121 / KW20 / Rd).